Reading from the N-terminus, the 413-residue chain is Alpha-1-antitrypsin 1-4 (413 aa).

An N-terminal signal peptide occupies residues 1-24; that stretch reads MTPSISWSLLLLAGLCCLVPSFLA. 3 N-linked (GlcNAc...) asparagine glycosylation sites follow: N64, N101, and N265. An RCL region spans residues 368 to 387; that stretch reads AATVLQVATYSMPPIVRFDH.

Belongs to the serpin family.

The protein resides in the secreted. Functionally, inhibitor of serine proteases. Can inhibit trypsin and chymotrypsin; relatively ineffective against elastase. The chain is Alpha-1-antitrypsin 1-4 (Serpina1d) from Mus musculus (Mouse).